A 109-amino-acid chain; its full sequence is Prothymosin alpha (109 aa).

The segment at 1–109 is disordered; that stretch reads MSDTSVDASV…AKKQKTDDDD (109 aa). Residues 9-35 are compositionally biased toward basic and acidic residues; sequence SVEKTTKDLKSKDKELVEETENGKDKP. The segment covering 41–81 has biased composition (acidic residues); that stretch reads ENEENGEDGADNEEEEEVDEEDEEDEGEGDDDEGDEDDEAD. The span at 99–109 shows a compositional bias: basic and acidic residues; the sequence is DAKKQKTDDDD.

This sequence belongs to the pro/parathymosin family. As to expression, highly expressed in the testis.

It localises to the nucleus. May have role in testicular activity. The chain is Prothymosin alpha from Pelophylax lessonae (Pool frog).